The primary structure comprises 630 residues: Pro-interleukin-16 (630 aa).

Disordered stretches follow at residues 30-268 (ENPG…FPLT) and 316-343 (PKEG…ASDT). The span at 129-143 (IRASSSSSIKQRISS) shows a compositional bias: low complexity. Position 220 is a phosphoserine (S220). Positions 321 to 343 (SPTSSSNEDSAANGSAETSASDT) are enriched in polar residues. Positions 404-500 (KQLDSIHVTI…IVTRKLTAES (97 aa)) are interaction with PPP1R12A, PPP1R12B and PPP1R12C. PDZ domains follow at residues 410–495 (HVTI…VTRK) and 532–617 (TVTL…IRRK).

As to quaternary structure, homotetramer. Pro-interleukin-16 interacts (via PDZ 2 domain) with PPP1R12A, PPP1R12B and PPP1R12C. Pro-interleukin-16 interacts with GRIN2A. Pro-interleukin-16 interacts with GABPB1. Pro-interleukin-16 interacts (via PDZ 3 domain) with HDAC3.

The protein resides in the secreted. Its subcellular location is the cytoplasm. It localises to the nucleus. Its function is as follows. Interleukin-16 stimulates a migratory response in CD4+ lymphocytes, monocytes, and eosinophils. Primes CD4+ T-cells for IL-2 and IL-15 responsiveness. Also induces T-lymphocyte expression of interleukin 2 receptor. Ligand for CD4. Functionally, pro-interleukin-16 is involved in cell cycle progression in T-cells. Appears to be involved in transcriptional regulation of SKP2 and is probably part of a transcriptional repression complex on the core promoter of the SKP2 gene. May act as a scaffold for GABPB1 (the DNA-binding subunit the GABP transcription factor complex) and HDAC3 thus maintaining transcriptional repression and blocking cell cycle progression in resting T-cells. This chain is Pro-interleukin-16 (IL16), found in Macaca mulatta (Rhesus macaque).